The following is a 178-amino-acid chain: MDKKTQALVEQYARSLVEVAFEQDAVSTIQEEVRQILTVFAETNLKTFLSQVNVTSEAKKESLSFFQESCSVYMNNFLEVISLNDRANILYDVLKLVLELFDQEDNTYDVTVTSASPLSEEQKTRLLTIVSQKFEIKTRRLVEKIDEELIGGFVIKAKNKFVDTSIRSQLQAFKMNLK.

The protein belongs to the ATPase delta chain family. As to quaternary structure, F-type ATPases have 2 components, F(1) - the catalytic core - and F(0) - the membrane proton channel. F(1) has five subunits: alpha(3), beta(3), gamma(1), delta(1), epsilon(1). F(0) has three main subunits: a(1), b(2) and c(10-14). The alpha and beta chains form an alternating ring which encloses part of the gamma chain. F(1) is attached to F(0) by a central stalk formed by the gamma and epsilon chains, while a peripheral stalk is formed by the delta and b chains.

It is found in the cell membrane. Its function is as follows. F(1)F(0) ATP synthase produces ATP from ADP in the presence of a proton or sodium gradient. F-type ATPases consist of two structural domains, F(1) containing the extramembraneous catalytic core and F(0) containing the membrane proton channel, linked together by a central stalk and a peripheral stalk. During catalysis, ATP synthesis in the catalytic domain of F(1) is coupled via a rotary mechanism of the central stalk subunits to proton translocation. In terms of biological role, this protein is part of the stalk that links CF(0) to CF(1). It either transmits conformational changes from CF(0) to CF(1) or is implicated in proton conduction. The protein is ATP synthase subunit delta of Streptococcus thermophilus (strain ATCC BAA-250 / LMG 18311).